The sequence spans 831 residues: Periplasmic nitrate reductase (831 aa).

Positions 1–38 (MSMARRDFIKQTAAAAAATVAGVPLTGYTQNIVTESEA) form a signal peptide, tat-type signal. The 4Fe-4S Mo/W bis-MGD-type domain occupies 41 to 97 (LKWSKAPCRFCGTGCGVNVAVKDNQVVATHGDFNAEVNKGLNCVKGYFLSKIMYGSD). Positions 48, 51, 55, and 83 each coordinate [4Fe-4S] cluster. Residues Lys-85, Gln-152, Asn-177, Cys-181, 214-221 (WGSNMAEM), 245-249 (STFEH), 264-266 (QSD), Met-375, Gln-379, Asn-485, 511-512 (SD), Lys-534, Asp-561, and 721-730 (TGRVLEHWHS) each bind Mo-bis(molybdopterin guanine dinucleotide). Trp-797 contributes to the substrate binding site. Positions 805 and 822 each coordinate Mo-bis(molybdopterin guanine dinucleotide).

This sequence belongs to the prokaryotic molybdopterin-containing oxidoreductase family. NasA/NapA/NarB subfamily. In terms of assembly, component of the periplasmic nitrate reductase NapAB complex composed of NapA and NapB. It depends on [4Fe-4S] cluster as a cofactor. Mo-bis(molybdopterin guanine dinucleotide) serves as cofactor. In terms of processing, predicted to be exported by the Tat system. The position of the signal peptide cleavage has not been experimentally proven.

It is found in the periplasm. It carries out the reaction 2 Fe(II)-[cytochrome] + nitrate + 2 H(+) = 2 Fe(III)-[cytochrome] + nitrite + H2O. Its function is as follows. Catalytic subunit of the periplasmic nitrate reductase complex NapAB. Receives electrons from NapB and catalyzes the reduction of nitrate to nitrite. The polypeptide is Periplasmic nitrate reductase (Bordetella parapertussis (strain 12822 / ATCC BAA-587 / NCTC 13253)).